Reading from the N-terminus, the 228-residue chain is MAASVRHLLKPWTPSLCLMRWSRYNPYYLDPEPRKDAPVSDSELSPEQKELQELKTVRPIKAALTGDTSSAFSDPLISKFINMMMYDGNKVLARGIMTQTLETIKRKQVEKYHKSPAAKREEIECNPYAIFHQAMENCKPVIGLASIQKGGKFYQVPVPLTDNRRRFMAMKWMITECRTNKQGRTLMYEKLSQELLAAFANEGNVIKRKHDLHKMAEANRAYAHYRWW.

A mitochondrion-targeting transit peptide spans 1–33 (MAASVRHLLKPWTPSLCLMRWSRYNPYYLDPEP).

The protein belongs to the universal ribosomal protein uS7 family. In terms of assembly, component of the mitochondrial ribosome small subunit (28S) which comprises a 12S rRNA and about 30 distinct proteins.

It localises to the mitochondrion. The chain is Small ribosomal subunit protein uS7m (mrps7) from Danio rerio (Zebrafish).